The sequence spans 210 residues: Heart- and neural crest derivatives-expressed protein 2 (210 aa).

The segment at S81–E101 is disordered. Over residues P90–E101 the composition is skewed to basic residues. Positions K92 to L144 constitute a bHLH domain.

In terms of assembly, efficient DNA binding requires dimerization with another bHLH protein. Heart, liver and spleen.

It localises to the nucleus. Essential for cardiac morphogenesis and for the development of branchial arches. Binds DNA on E-box consensus sequence 5'-CANNTG-3'. The polypeptide is Heart- and neural crest derivatives-expressed protein 2 (hand2) (Xenopus laevis (African clawed frog)).